Here is a 428-residue protein sequence, read N- to C-terminus: Protein CLP1 homolog (428 aa).

ATP contacts are provided by residues glutamate 22, lysine 63, and 127 to 132 (DVGKST).

This sequence belongs to the Clp1 family. Clp1 subfamily.

It localises to the nucleus. Its function is as follows. Required for endonucleolytic cleavage during polyadenylation-dependent pre-mRNA 3'-end formation. The protein is Protein CLP1 homolog of Nematostella vectensis (Starlet sea anemone).